The chain runs to 439 residues: L-tryptophan decarboxylase (439 aa).

It belongs to the phosphatidylserine decarboxylase family.

The enzyme catalyses L-tryptophan + H(+) = tryptamine + CO2. It participates in secondary metabolite biosynthesis. L-tryptophan decarboxylase; part of the gene cluster that mediates the biosynthesis of psilocybin, a psychotropic tryptamine-derived natural product. The first step in the pathway is the decarboxylation of L-tryptophan to tryptamine by the decarboxylase psiD. PsiD does not decarboxylate phenylalanine, tyrosine, or 5-hydroxy- L -tryptophan (5-HTP). 4-hydroxy-L-tryptophan is accepted as substrate by psiD as well. The cytochrome P450 monooxygenase psiH then converts tryptamine to 4-hydroxytryptamine. The kinase psiK catalyzes the 4-O-phosphorylation step by converting 4-hydroxytryptamine into norbaeocystin. The methyltransferase psiM then catalyzes iterative methyl transfer to the amino group of norbaeocystin to yield psilocybin via a monomethylated intermediate, baeocystin. 4-hydroxy-6-methyl-l-tryptophancan also be converted the decarboxylase PsiD, kinase PsiK, and methyltransferase PsiM into respectively 6-methyl-norbaeocystin, 6-methylbaeocystin, and 6-methylpsilocybin. In Psilocybe cyanescens, this protein is L-tryptophan decarboxylase.